We begin with the raw amino-acid sequence, 619 residues long: Lysophospholipid acyltransferase (619 aa).

At 1-19 (MYNPVDAVLTKIITNYGID) the chain is on the lumenal side. A helical membrane pass occupies residues 20-39 (SFTLRYAICLLGSFPLNAIL). The Cytoplasmic portion of the chain corresponds to 40–51 (KRIPEKRIGLKC). Residues 52–72 (CFIISMSMFYLFGVLNLVSGF) traverse the membrane as a helical segment. Over 73 to 92 (RTLFISTMFTYLISRFYRSK) the chain is Lumenal. The chain crosses the membrane as a helical span at residues 93–113 (FMPHLNFMFVMGHLAINHIHA). Residues 114 to 231 (QFLNEQTQTT…GERRQIPKNG (118 aa)) are Cytoplasmic-facing. Aspartate 146 acts as the Nucleophile in catalysis. Residues 232-252 (KLALWKVVQGLAWMILSTLGM) form a helical membrane-spanning segment. The Lumenal portion of the chain corresponds to 253-274 (KHFPVKYVLDKDGFPTRSFIFR). The chain crosses the membrane as a helical span at residues 275–295 (IHYLFLLGFIHRFKYYAAWTI). The Cytoplasmic segment spans residues 296-429 (SEGSCILCGL…TPLPSKKIYD (134 aa)). Glutamate 297 functions as the Nucleophile in the catalytic mechanism. Histidine 382 is an active-site residue. Residues 430–450 (LVGIYAIKLAFGYMVQPFIIL) form a helical membrane-spanning segment. Over 451–456 (DLKPSL) the chain is Lumenal. The helical transmembrane segment at 457–477 (MVWGSVYFYVHIIVAFSFFLF) threads the bilayer. Residues 478–619 (RGPYAKQVTE…SPKPISKKEE (142 aa)) lie on the Cytoplasmic side of the membrane. Serine 513 is modified (phosphoserine). Positions 545–593 (ELEKWDNAKEDWEDFCKDYKEWRNKNGLEIEEENLSKAFERFKQEFSNA) form a coiled coil. Residues 592–619 (NAASGSGERVRKMSFSGYSPKPISKKEE) form a disordered region. 3 positions are modified to phosphoserine: serine 605, serine 610, and serine 615.

This sequence belongs to the membrane-bound acyltransferase family.

The protein resides in the endoplasmic reticulum membrane. The catalysed reaction is a 1-acyl-sn-glycero-3-phosphate + an acyl-CoA = a 1,2-diacyl-sn-glycero-3-phosphate + CoA. The enzyme catalyses a 1-acyl-sn-glycero-3-phosphocholine + an acyl-CoA = a 1,2-diacyl-sn-glycero-3-phosphocholine + CoA. It carries out the reaction 1-acyl-sn-glycero-3-phospho-(1'-sn-glycerol) + an acyl-CoA = a 1,2-diacyl-sn-glycero-3-phospho-(1'-sn-glycerol) + CoA. It catalyses the reaction a 1-acyl-sn-glycero-3-phospho-(1D-myo-inositol) + an acyl-CoA = a 1,2-diacyl-sn-glycero-3-phospho-(1D-myo-inositol) + CoA. The catalysed reaction is a 1-acyl-sn-glycero-3-phospho-L-serine + an acyl-CoA = a 1,2-diacyl-sn-glycero-3-phospho-L-serine + CoA. The enzyme catalyses a 1-acyl-sn-glycero-3-phosphoethanolamine + an acyl-CoA = a 1,2-diacyl-sn-glycero-3-phosphoethanolamine + CoA. It carries out the reaction 1-(9Z-octadecenoyl)-sn-glycero-3-phosphoethanolamine + (9Z)-octadecenoyl-CoA = 1,2-di-(9Z-octadecenoyl)-sn-glycero-3-phosphoethanolamine + CoA. It catalyses the reaction 1-(9Z-octadecenoyl)-sn-glycero-3-phosphoethanolamine + (9Z)-hexadecenoyl-CoA = 1-(9Z)-octadecenoyl-2-(9Z)-hexadecenoyl-sn-glycero-3-phosphoethanolamine + CoA. The catalysed reaction is 1-(9Z-octadecenoyl)-sn-glycero-3-phosphoethanolamine + hexadecanoyl-CoA = 1-(9Z-octadecenoyl)-2-hexadecanoyl-sn-glycero-3-phosphoethanolamine + CoA. The enzyme catalyses 1-(9Z-octadecenoyl)-sn-glycero-3-phosphoethanolamine + tetradecanoyl-CoA = 1-(9Z)-octadecenoyl-2-tetradecanoyl-sn-glycero-3-phosphoethanolamine + CoA. It carries out the reaction 1-(9Z-octadecenoyl)-sn-glycero-3-phosphate + (9Z)-octadecenoyl-CoA = 1,2-di-(9Z-octadecenoyl)-sn-glycero-3-phosphate + CoA. It catalyses the reaction (9Z)-hexadecenoyl-CoA + 1-hexadecanoyl-sn-glycero-3-phosphocholine = 1-hexadecanoyl-2-(9Z-hexadecenoyl)-sn-glycero-3-phosphocholine + CoA. The catalysed reaction is 1-hexadecanoyl-sn-glycero-3-phosphocholine + (9Z)-octadecenoyl-CoA = 1-hexadecanoyl-2-(9Z-octadecenoyl)-sn-glycero-3-phosphocholine + CoA. The enzyme catalyses 1-tetradecanoyl-sn-glycero-3-phosphoethanolamine + (9Z)-octadecenoyl-CoA = 1-tetradecanoyl-2-(9Z-octadecenoyl)-sn-glycero-3-phosphoethanolamine + CoA. It carries out the reaction 1-(9Z-octadecenoyl)-sn-glycero-3-phospho-L-serine + (9Z)-octadecenoyl-CoA = 1,2-di-(9Z)-octadecenoyl-sn-glycero-3-phospho-L-serine + CoA. It catalyses the reaction a 1-acyl-sn-glycero-3-phospho-(1D-myo-inositol) + (9Z)-octadecenoyl-CoA = a 1-acyl-2-(9Z-octadecenoyl)-sn-glycero-3-phospho-(1D-myo-inositol) + CoA. Its pathway is lipid metabolism; phospholipid metabolism. Broad specificity membrane-bound O-acyltransferase that mediates the incorporation of unsaturated acyl chains into the sn-2 position of various lysophospholipids. Preferentially acylates lysophosphocholine (LPC), but also lysophosphoethanolamine (LPE), lysophosphatidylglycerol (LPG), lysophosphatidic acid (LPA), lysophosphoethanolamine (LPE), lysophosphoinositol (LPI), and lysophosphoserine (LPS). Prefers an acyl residue to an alkyl residue at the sn-1 position of lysophospholipid acceptors. Accepts acyl chains in acyl-CoA from C-2 to C-20, and shows strong preference for unsaturated acyl-CoAs with 16-20 carbons. Together with SLC1, plays a central role in phosphatidic acid (PA) biosynthesis. PA is the intermediate, from which all glycerophospholipids are synthesized. Can also introduce an acyl chain at the sn-1 position of the lysophosphatidylcholine analog 1-hydroxy-2-hexadecyl-sn-glycero-3-phosphocholine (HHPC). The sequence is that of Lysophospholipid acyltransferase from Saccharomyces cerevisiae (strain ATCC 204508 / S288c) (Baker's yeast).